We begin with the raw amino-acid sequence, 432 residues long: Leucine-rich repeat-containing protein ODA7 (432 aa).

LRR repeat units follow at residues 47-68 (NLKA…PPLA), 69-90 (DLKC…EAVP), 91-112 (GLDT…ACCP), 113-134 (ALRT…AHLA), and 138-159 (ALQT…DILK). The LRRCT domain occupies 173–211 (PVVSNIKNYRKVLVTSIPSLTYLDDRPVFDNERKIAQAW). Positions 212 to 243 (LEGGLEGERAMRNQLKEEEEERSRKNHEFMMQ) form a coiled coil. 2 disordered regions span residues 297-332 (RPGE…AAAE) and 368-432 (EELD…NDLD). 2 stretches are compositionally biased toward low complexity: residues 323–332 (GAWGSGAAAE) and 407–425 (VAAA…ISAA).

The protein belongs to the DNAAF1 family. As to quaternary structure, interacts with both outer row and I1 inner row dyneins.

It localises to the cytoplasm. Its subcellular location is the cytoskeleton. The protein resides in the cilium axoneme. Its function is as follows. Cilium-specific protein required for cilia structures. Axonemal dynein-associated protein that participates in a structural link between inner and outer row dyneins. This Chlamydomonas reinhardtii (Chlamydomonas smithii) protein is Leucine-rich repeat-containing protein ODA7 (ODA7).